Reading from the N-terminus, the 517-residue chain is tRNA-2-methylthio-N(6)-dimethylallyladenosine synthase (517 aa).

An MTTase N-terminal domain is found at 18 to 137; sequence RTYQVRTYGC…LPTLLDRARH (120 aa). 6 residues coordinate [4Fe-4S] cluster: Cys-27, Cys-66, Cys-100, Cys-174, Cys-178, and Cys-181. The Radical SAM core domain maps to 160–397; sequence RESDYAAWVS…ELQEQICMEE (238 aa). One can recognise a TRAM domain in the interval 399–470; that stretch reads RVLIGRIVEL…PHHLIADAGI (72 aa).

This sequence belongs to the methylthiotransferase family. MiaB subfamily. Monomer. It depends on [4Fe-4S] cluster as a cofactor.

The protein resides in the cytoplasm. The enzyme catalyses N(6)-dimethylallyladenosine(37) in tRNA + (sulfur carrier)-SH + AH2 + 2 S-adenosyl-L-methionine = 2-methylsulfanyl-N(6)-dimethylallyladenosine(37) in tRNA + (sulfur carrier)-H + 5'-deoxyadenosine + L-methionine + A + S-adenosyl-L-homocysteine + 2 H(+). Functionally, catalyzes the methylthiolation of N6-(dimethylallyl)adenosine (i(6)A), leading to the formation of 2-methylthio-N6-(dimethylallyl)adenosine (ms(2)i(6)A) at position 37 in tRNAs that read codons beginning with uridine. The protein is tRNA-2-methylthio-N(6)-dimethylallyladenosine synthase of Mycobacterium leprae (strain TN).